The primary structure comprises 221 residues: Phosphatidylserine decarboxylase proenzyme (221 aa).

The active-site Schiff-base intermediate with substrate; via pyruvic acid is the Ser189. Residue Ser189 is modified to Pyruvic acid (Ser); by autocatalysis.

It belongs to the phosphatidylserine decarboxylase family. PSD-A subfamily. Heterodimer of a large membrane-associated beta subunit and a small pyruvoyl-containing alpha subunit. The cofactor is pyruvate. Post-translationally, is synthesized initially as an inactive proenzyme. Formation of the active enzyme involves a self-maturation process in which the active site pyruvoyl group is generated from an internal serine residue via an autocatalytic post-translational modification. Two non-identical subunits are generated from the proenzyme in this reaction, and the pyruvate is formed at the N-terminus of the alpha chain, which is derived from the carboxyl end of the proenzyme. The post-translation cleavage follows an unusual pathway, termed non-hydrolytic serinolysis, in which the side chain hydroxyl group of the serine supplies its oxygen atom to form the C-terminus of the beta chain, while the remainder of the serine residue undergoes an oxidative deamination to produce ammonia and the pyruvoyl prosthetic group on the alpha chain.

It localises to the cell membrane. It catalyses the reaction a 1,2-diacyl-sn-glycero-3-phospho-L-serine + H(+) = a 1,2-diacyl-sn-glycero-3-phosphoethanolamine + CO2. The protein operates within phospholipid metabolism; phosphatidylethanolamine biosynthesis; phosphatidylethanolamine from CDP-diacylglycerol: step 2/2. Functionally, catalyzes the formation of phosphatidylethanolamine (PtdEtn) from phosphatidylserine (PtdSer). The protein is Phosphatidylserine decarboxylase proenzyme of Porphyromonas gingivalis (strain ATCC 33277 / DSM 20709 / CIP 103683 / JCM 12257 / NCTC 11834 / 2561).